Consider the following 122-residue polypeptide: UPF0382 membrane protein SE_0353 (122 aa).

Helical transmembrane passes span 3-23 (VFII…AFGA), 46-66 (MYHG…SINV), 69-89 (AGWL…FLAL), and 98-118 (ITPI…IATL).

This sequence belongs to the UPF0382 family.

The protein localises to the cell membrane. In Staphylococcus epidermidis (strain ATCC 12228 / FDA PCI 1200), this protein is UPF0382 membrane protein SE_0353.